A 216-amino-acid chain; its full sequence is Ribosomal RNA large subunit methyltransferase E (216 aa).

S-adenosyl-L-methionine is bound by residues Gly67, Trp69, Asp87, Asp103, and Asp128. Residue Lys168 is the Proton acceptor of the active site.

Belongs to the class I-like SAM-binding methyltransferase superfamily. RNA methyltransferase RlmE family.

Its subcellular location is the cytoplasm. It catalyses the reaction uridine(2552) in 23S rRNA + S-adenosyl-L-methionine = 2'-O-methyluridine(2552) in 23S rRNA + S-adenosyl-L-homocysteine + H(+). In terms of biological role, specifically methylates the uridine in position 2552 of 23S rRNA at the 2'-O position of the ribose in the fully assembled 50S ribosomal subunit. The sequence is that of Ribosomal RNA large subunit methyltransferase E from Acinetobacter baylyi (strain ATCC 33305 / BD413 / ADP1).